Reading from the N-terminus, the 173-residue chain is Protein-export protein SecB 1 (173 aa).

It belongs to the SecB family. As to quaternary structure, homotetramer, a dimer of dimers. One homotetramer interacts with 1 SecA dimer.

The protein resides in the cytoplasm. Functionally, one of the proteins required for the normal export of preproteins out of the cell cytoplasm. It is a molecular chaperone that binds to a subset of precursor proteins, maintaining them in a translocation-competent state. It also specifically binds to its receptor SecA. This chain is Protein-export protein SecB 1, found in Gluconobacter oxydans (strain 621H) (Gluconobacter suboxydans).